Reading from the N-terminus, the 293-residue chain is MYLRFANRKPYEKLHLSTALEDWDMSEELKLSITADQYFAGADDKVERYTLRRQHSTEVSPTRSEEGDYQECTFRPSLWLVVDPNLVIPCPEWINRIPPEPELTSPPLQLQRQLSNDYSTVEDSEDEAPTSCSDVLTDDDDSYNPWQPKHKRKKAKCLGKKLRVQKGLTQLESWPRPPLNYCNLISLALRNSEDGSLNVQQIYSFVREHFPFFRIAPDGWKNTVRHNLCFSSSFEKSSGWVCADGHRRSCLWKLTRQGRRKFRNEMHALSDDLLHVLRKSMKKPALMELMFGM.

The interval 104 to 152 (TSPPLQLQRQLSNDYSTVEDSEDEAPTSCSDVLTDDDDSYNPWQPKHKR) is disordered. Residues 106–119 (PPLQLQRQLSNDYS) show a composition bias toward polar residues. Positions 176-273 (RPPLNYCNLI…NEMHALSDDL (98 aa)) form a DNA-binding region, fork-head.

The protein localises to the nucleus. The protein is Forkhead box protein N5 of Xenopus tropicalis (Western clawed frog).